The sequence spans 404 residues: L-cysteine:1D-myo-inositol 2-amino-2-deoxy-alpha-D-glucopyranoside ligase 1 (404 aa).

Cys47 is a binding site for Zn(2+). L-cysteinyl-5'-AMP contacts are provided by residues 47 to 50 (CGIT), Thr62, and 85 to 87 (NIT). The 'HIGH' region signature appears at 49–59 (ITPYDSTHLGH). Residues 188 to 193 (ERGGDP) carry the 'ERGGDP' region motif. L-cysteinyl-5'-AMP is bound at residue Trp228. A Zn(2+)-binding site is contributed by Cys232. Residue 250 to 252 (GSD) participates in L-cysteinyl-5'-AMP binding. Zn(2+) is bound at residue His257. Ile284 serves as a coordination point for L-cysteinyl-5'-AMP. The 'KMSKS' region motif lies at 290-294 (KMSKS).

Belongs to the class-I aminoacyl-tRNA synthetase family. MshC subfamily. Monomer. Zn(2+) is required as a cofactor.

It carries out the reaction 1D-myo-inositol 2-amino-2-deoxy-alpha-D-glucopyranoside + L-cysteine + ATP = 1D-myo-inositol 2-(L-cysteinylamino)-2-deoxy-alpha-D-glucopyranoside + AMP + diphosphate + H(+). Catalyzes the ATP-dependent condensation of GlcN-Ins and L-cysteine to form L-Cys-GlcN-Ins. This Corynebacterium jeikeium (strain K411) protein is L-cysteine:1D-myo-inositol 2-amino-2-deoxy-alpha-D-glucopyranoside ligase 1.